A 142-amino-acid chain; its full sequence is Putative pre-16S rRNA nuclease (142 aa).

The protein belongs to the YqgF nuclease family.

The protein resides in the cytoplasm. In terms of biological role, could be a nuclease involved in processing of the 5'-end of pre-16S rRNA. The sequence is that of Putative pre-16S rRNA nuclease from Staphylococcus aureus (strain JH1).